The sequence spans 541 residues: Glucose-6-phosphate isomerase (541 aa).

The active-site Proton donor is the E346. Active-site residues include H377 and K506.

This sequence belongs to the GPI family.

Its subcellular location is the cytoplasm. It carries out the reaction alpha-D-glucose 6-phosphate = beta-D-fructose 6-phosphate. It participates in carbohydrate biosynthesis; gluconeogenesis. It functions in the pathway carbohydrate degradation; glycolysis; D-glyceraldehyde 3-phosphate and glycerone phosphate from D-glucose: step 2/4. Catalyzes the reversible isomerization of glucose-6-phosphate to fructose-6-phosphate. The chain is Glucose-6-phosphate isomerase from Rhizobium johnstonii (strain DSM 114642 / LMG 32736 / 3841) (Rhizobium leguminosarum bv. viciae).